Here is a 282-residue protein sequence, read N- to C-terminus: Ermin (282 aa).

2 stretches are compositionally biased toward polar residues: residues 1 to 12 and 21 to 30; these read MTDTPVTLSGSE and NGQQPSSQTR. Positions 1-71 are disordered; sequence MTDTPVTLSG…NSKGNVLPRG (71 aa). Phosphoserine occurs at positions 72, 212, 224, 228, and 231. The segment covering 212–224 has biased composition (basic and acidic residues); the sequence is SPLKEESLAREDS. The segment at 212-246 is disordered; it reads SPLKEESLAREDSPLSSPSSQPGTPDEQLVLGKKG. Residues 225-234 show a composition bias toward polar residues; sequence PLSSPSSQPG. Thr235 is subject to Phosphothreonine. The binds actin stretch occupies residues 263 to 282; the sequence is KIRKGNTKQRIDEFESMMHL.

Binds actin. As to expression, expressed specifically by the oligodendrocytes. Highest expression seen in the spinal cord followed by brainstem, cerebellum, thalamus, and hypothalamus. In the myelin sheath, found mainly in the abaxon and the lateral few terminal loops. Its apposition to the myelinated axon, through the latter, defines an axonal subregion, termed juxtanode, at the Ranvier node-paranode junction.

It localises to the cytoplasm. The protein resides in the cytoskeleton. Plays a role in cytoskeletal rearrangements during the late wrapping and/or compaction phases of myelinogenesis as well as in maintenance and stability of myelin sheath in the adult. May play an important role in late-stage oligodendroglia maturation, myelin/Ranvier node formation during CNS development, and in the maintenance and plasticity of related structures in the mature CNS. In Rattus norvegicus (Rat), this protein is Ermin (Ermn).